Reading from the N-terminus, the 278-residue chain is Small ribosomal subunit protein uS3 (278 aa).

One can recognise a KH type-2 domain in the interval 39 to 107 (LRKAISKKYV…KVQLNIVEIS (69 aa)). Residues 255-278 (AEIPAEEKPKRVVKKAENITKEEE) are disordered.

It belongs to the universal ribosomal protein uS3 family. Part of the 30S ribosomal subunit. Forms a tight complex with proteins S10 and S14.

Functionally, binds the lower part of the 30S subunit head. Binds mRNA in the 70S ribosome, positioning it for translation. The sequence is that of Small ribosomal subunit protein uS3 from Dehalococcoides mccartyi (strain CBDB1).